A 449-amino-acid polypeptide reads, in one-letter code: Required for meiotic nuclear division protein 1 homolog (449 aa).

The N-terminal 12 residues, 1–12 (MPATLLRAVARS), are a transit peptide targeting the mitochondrion.

Belongs to the RMD1/sif2 family. Homooligomer.

The protein localises to the mitochondrion. Required for mitochondrial translation, possibly by coordinating the assembly or maintenance of the mitochondrial ribosome. This Homo sapiens (Human) protein is Required for meiotic nuclear division protein 1 homolog (RMND1).